A 178-amino-acid polypeptide reads, in one-letter code: Mediator of RNA polymerase II transcription subunit 30 (178 aa).

Residues 1–22 form a disordered region; sequence MSTPPLAPTGMASGPFGGPQAQ. N-acetylserine is present on S2. Residues 134-173 adopt a coiled-coil conformation; sequence FASEERREIVEVNKKLKQKNQQLKQIMDQLRNLIWDINAM.

Belongs to the Mediator complex subunit 30 family. As to quaternary structure, component of the Mediator complex, which is composed of MED1, MED4, MED6, MED7, MED8, MED9, MED10, MED11, MED12, MED13, MED13L, MED14, MED15, MED16, MED17, MED18, MED19, MED20, MED21, MED22, MED23, MED24, MED25, MED26, MED27, MED29, MED30, MED31, CCNC, CDK8 and CDC2L6/CDK11. The MED12, MED13, CCNC and CDK8 subunits form a distinct module termed the CDK8 module. Mediator containing the CDK8 module is less active than Mediator lacking this module in supporting transcriptional activation. Individual preparations of the Mediator complex lacking one or more distinct subunits have been variously termed ARC, CRSP, DRIP, PC2, SMCC and TRAP.

The protein resides in the nucleus. Its function is as follows. Component of the Mediator complex, a coactivator involved in the regulated transcription of nearly all RNA polymerase II-dependent genes. Mediator functions as a bridge to convey information from gene-specific regulatory proteins to the basal RNA polymerase II transcription machinery. Mediator is recruited to promoters by direct interactions with regulatory proteins and serves as a scaffold for the assembly of a functional preinitiation complex with RNA polymerase II and the general transcription factors. The polypeptide is Mediator of RNA polymerase II transcription subunit 30 (Med30) (Mus musculus (Mouse)).